A 122-amino-acid polypeptide reads, in one-letter code: Large ribosomal subunit protein bL17 (122 aa).

Belongs to the bacterial ribosomal protein bL17 family. In terms of assembly, part of the 50S ribosomal subunit. Contacts protein L32.

The polypeptide is Large ribosomal subunit protein bL17 (Staphylococcus epidermidis (strain ATCC 35984 / DSM 28319 / BCRC 17069 / CCUG 31568 / BM 3577 / RP62A)).